A 111-amino-acid polypeptide reads, in one-letter code: Universal stress protein B (111 aa).

The helical transmembrane segment at 1-21 threads the bilayer; sequence MISTVSLFWALCVVCIVNMAR. Topologically, residues 22-89 are cytoplasmic; the sequence is YFSSLRALLV…IRRCERVRRQ (68 aa). The helical transmembrane segment at 90–110 threads the bilayer; that stretch reads FLLTSALCGLVVVSLIALMIW. Histidine 111 is a topological domain (periplasmic).

It belongs to the universal stress protein B family.

Its subcellular location is the cell inner membrane. The chain is Universal stress protein B (uspB) from Salmonella choleraesuis (strain SC-B67).